The following is a 156-amino-acid chain: Small ribosomal subunit protein uS7 (156 aa).

Belongs to the universal ribosomal protein uS7 family. Part of the 30S ribosomal subunit. Contacts proteins S9 and S11.

Functionally, one of the primary rRNA binding proteins, it binds directly to 16S rRNA where it nucleates assembly of the head domain of the 30S subunit. Is located at the subunit interface close to the decoding center, probably blocks exit of the E-site tRNA. This is Small ribosomal subunit protein uS7 from Desulfosudis oleivorans (strain DSM 6200 / JCM 39069 / Hxd3) (Desulfococcus oleovorans).